The following is a 139-amino-acid chain: Phosphoribosyl-AMP cyclohydrolase (139 aa).

Asp91 is a Mg(2+) binding site. Residue Cys92 participates in Zn(2+) binding. The Mg(2+) site is built by Asp93 and Asp95. Positions 110 and 117 each coordinate Zn(2+).

Belongs to the PRA-CH family. In terms of assembly, homodimer. Requires Mg(2+) as cofactor. The cofactor is Zn(2+).

Its subcellular location is the cytoplasm. It catalyses the reaction 1-(5-phospho-beta-D-ribosyl)-5'-AMP + H2O = 1-(5-phospho-beta-D-ribosyl)-5-[(5-phospho-beta-D-ribosylamino)methylideneamino]imidazole-4-carboxamide. Its pathway is amino-acid biosynthesis; L-histidine biosynthesis; L-histidine from 5-phospho-alpha-D-ribose 1-diphosphate: step 3/9. Catalyzes the hydrolysis of the adenine ring of phosphoribosyl-AMP. The sequence is that of Phosphoribosyl-AMP cyclohydrolase from Brucella abortus (strain S19).